Here is a 419-residue protein sequence, read N- to C-terminus: UDP-N-acetylglucosamine 1-carboxyvinyltransferase 1 (419 aa).

22–23 (KN) provides a ligand contact to phosphoenolpyruvate. Arg-92 provides a ligand contact to UDP-N-acetyl-alpha-D-glucosamine. Catalysis depends on Cys-116, which acts as the Proton donor. Cys-116 carries the 2-(S-cysteinyl)pyruvic acid O-phosphothioketal modification. UDP-N-acetyl-alpha-D-glucosamine is bound by residues 121-125 (RPIDL), Asp-306, and Ile-328.

Belongs to the EPSP synthase family. MurA subfamily.

The protein resides in the cytoplasm. The catalysed reaction is phosphoenolpyruvate + UDP-N-acetyl-alpha-D-glucosamine = UDP-N-acetyl-3-O-(1-carboxyvinyl)-alpha-D-glucosamine + phosphate. It functions in the pathway cell wall biogenesis; peptidoglycan biosynthesis. Functionally, cell wall formation. Adds enolpyruvyl to UDP-N-acetylglucosamine. The chain is UDP-N-acetylglucosamine 1-carboxyvinyltransferase 1 from Streptococcus agalactiae serotype Ia (strain ATCC 27591 / A909 / CDC SS700).